Reading from the N-terminus, the 154-residue chain is Myoglobin (154 aa).

The region spanning Gly2–Lys148 is the Globin domain. His65 serves as a coordination point for nitrite. Position 65 (His65) interacts with O2. His94 contributes to the heme b binding site.

It belongs to the globin family. As to quaternary structure, monomeric.

Its subcellular location is the cytoplasm. The protein resides in the sarcoplasm. It carries out the reaction Fe(III)-heme b-[protein] + nitric oxide + H2O = Fe(II)-heme b-[protein] + nitrite + 2 H(+). It catalyses the reaction H2O2 + AH2 = A + 2 H2O. In terms of biological role, monomeric heme protein which primary function is to store oxygen and facilitate its diffusion within muscle tissues. Reversibly binds oxygen through a pentacoordinated heme iron and enables its timely and efficient release as needed during periods of heightened demand. Depending on the oxidative conditions of tissues and cells, and in addition to its ability to bind oxygen, it also has a nitrite reductase activity whereby it regulates the production of bioactive nitric oxide. Under stress conditions, like hypoxia and anoxia, it also protects cells against reactive oxygen species thanks to its pseudoperoxidase activity. The polypeptide is Myoglobin (MB) (Uria lomvia (Thick-billed murre)).